Reading from the N-terminus, the 158-residue chain is NADPH-dependent 7-cyano-7-deazaguanine reductase (158 aa).

Residues 1–37 (MAKRSIKSETSPELQLGRPVTAPDSPETARLDRVPNP) form a disordered region. Positions 27–37 (ETARLDRVPNP) are enriched in basic and acidic residues. Catalysis depends on C56, which acts as the Thioimide intermediate. D63 serves as the catalytic Proton donor. Substrate is bound by residues 78-80 (VES) and 97-98 (HE).

It belongs to the GTP cyclohydrolase I family. QueF type 1 subfamily.

The protein localises to the cytoplasm. The catalysed reaction is 7-aminomethyl-7-carbaguanine + 2 NADP(+) = 7-cyano-7-deazaguanine + 2 NADPH + 3 H(+). The protein operates within tRNA modification; tRNA-queuosine biosynthesis. Catalyzes the NADPH-dependent reduction of 7-cyano-7-deazaguanine (preQ0) to 7-aminomethyl-7-deazaguanine (preQ1). This Bradyrhizobium sp. (strain BTAi1 / ATCC BAA-1182) protein is NADPH-dependent 7-cyano-7-deazaguanine reductase.